Consider the following 519-residue polypeptide: Probable cytosol aminopeptidase (519 aa).

Mn(2+) contacts are provided by lysine 283 and aspartate 288. Residue lysine 295 is part of the active site. 3 residues coordinate Mn(2+): aspartate 306, aspartate 365, and glutamate 367. The active site involves arginine 369.

It belongs to the peptidase M17 family. Mn(2+) is required as a cofactor.

Its subcellular location is the cytoplasm. It carries out the reaction Release of an N-terminal amino acid, Xaa-|-Yaa-, in which Xaa is preferably Leu, but may be other amino acids including Pro although not Arg or Lys, and Yaa may be Pro. Amino acid amides and methyl esters are also readily hydrolyzed, but rates on arylamides are exceedingly low.. The catalysed reaction is Release of an N-terminal amino acid, preferentially leucine, but not glutamic or aspartic acids.. Presumably involved in the processing and regular turnover of intracellular proteins. Catalyzes the removal of unsubstituted N-terminal amino acids from various peptides. The protein is Probable cytosol aminopeptidase of Mycobacterium ulcerans (strain Agy99).